The chain runs to 527 residues: GMP synthase [glutamine-hydrolyzing] (527 aa).

One can recognise a Glutamine amidotransferase type-1 domain in the interval 20–208 (SVVILDYGSQ…LFDVCGCAPT (189 aa)). The active-site Nucleophile is C97. Active-site residues include H182 and E184. One can recognise a GMPS ATP-PPase domain in the interval 209-402 (WTAESFVEQA…LGLPEEIVQR (194 aa)). Residue 236–242 (SGGVDSS) participates in ATP binding.

Homodimer.

The catalysed reaction is XMP + L-glutamine + ATP + H2O = GMP + L-glutamate + AMP + diphosphate + 2 H(+). It participates in purine metabolism; GMP biosynthesis; GMP from XMP (L-Gln route): step 1/1. In terms of biological role, catalyzes the synthesis of GMP from XMP. The chain is GMP synthase [glutamine-hydrolyzing] from Thermomicrobium roseum (strain ATCC 27502 / DSM 5159 / P-2).